Here is a 480-residue protein sequence, read N- to C-terminus: Type VI lipase adapter protein Tla3 (480 aa).

A disordered region spans residues isoleucine 410–glycine 458.

As to quaternary structure, interacts with the Tle3 toxin on one side and with the H2-T6SS component VgrG2b on the other side.

The protein localises to the cytoplasm. Functionally, adapter protein that targets and loads the Tle3 toxin onto the H2 type VI secretion system (H2-T6SS) machinery through an interaction with the TTR domain of VgrG2b. Seems specific for Tle3. The polypeptide is Type VI lipase adapter protein Tla3 (Pseudomonas aeruginosa (strain ATCC 15692 / DSM 22644 / CIP 104116 / JCM 14847 / LMG 12228 / 1C / PRS 101 / PAO1)).